A 146-amino-acid polypeptide reads, in one-letter code: Snake venom vascular endothelial growth factor toxin TfsvVEGF (146 aa).

An N-terminal signal peptide occupies residues methionine 1–glycine 24. At glutamine 25 the chain carries Pyrrolidone carboxylic acid. Cystine bridges form between cysteine 38/cysteine 80, cysteine 69/cysteine 115, and cysteine 73/cysteine 117. Residues arginine 118–proline 139 are compositionally biased toward basic and acidic residues. Residues arginine 118–valine 146 are disordered.

It belongs to the PDGF/VEGF growth factor family. Snake venom VEGF subfamily. As to quaternary structure, homodimer; disulfide-linked. Interacts with VEGF receptor-1 (FLT1) with a high affinity, whereas it binds to VEGF receptor-2 (KDR) with a low affinity. Does not bind VEGF receptor-3 (FLT4). As to expression, expressed by the venom gland.

It localises to the secreted. In terms of biological role, snake venom VEGFs may contribute to venom dispersion and prey subjugation by inducing vascular permeability and hypotension. This protein strongly increases vascular permeability, and weakly stimulates angiogenesis. Interacts with VEGF receptor-1 (FLT1) with a high affinity, whereas it binds to VEGF receptor-2 (KDR) with a low affinity. Stimulates autophosphorylation of VEGF receptor-1 (VEGFR-1/FLT1), and VEGF receptor-2 (VEGFR-2/KDR). The chain is Snake venom vascular endothelial growth factor toxin TfsvVEGF from Protobothrops flavoviridis (Habu).